A 256-amino-acid chain; its full sequence is GTP cyclohydrolase FolE2 (256 aa).

It belongs to the GTP cyclohydrolase IV family.

The catalysed reaction is GTP + H2O = 7,8-dihydroneopterin 3'-triphosphate + formate + H(+). It participates in cofactor biosynthesis; 7,8-dihydroneopterin triphosphate biosynthesis; 7,8-dihydroneopterin triphosphate from GTP: step 1/1. Its function is as follows. Converts GTP to 7,8-dihydroneopterin triphosphate. The sequence is that of GTP cyclohydrolase FolE2 from Caldicellulosiruptor bescii (strain ATCC BAA-1888 / DSM 6725 / KCTC 15123 / Z-1320) (Anaerocellum thermophilum).